A 628-amino-acid chain; its full sequence is WDRHGVPVEYEIDKALGITGVKDIHDMGIRKYNKECRKIVLRYTKEWEAVVKRMGRWIDFRNGYRTMDRSFMESIWHIFKMLYEKGSVYRGHRVMPYSTACSTPLSNFEANQNYKDVSDPSILVAFPLRKPFKGYSLSLVAWTTTPWTLPSHMAILVNQSFIYAIFRLKSAFFIMQRDRVNVYFKDAVVISEVKGHELLHLEHDQPFMYYNHYREKGFFRVYHADFVSEIDGTGVVHCSPGFGEDDYKAMTMPGLIKENELLPSPLDENGRFNEEVPEYKGMHVKDADQSIIKDLGKKILYEGKVYHRYPFCWRSDTPLIYKLVPNWFVRVKREIPRLLESNSTINWIPESIGEHKFKNWLSEARDWSISRNRFWGTPIPLWHCDGKYICIGSIEELSRLSGRKIDDIHRENVDDVVICKDGEKYRRIEEVFDCWFESGCMPYAQRHWPFECDNLCLPADFVAEGVDQTRGWFYTMHVISTVLLAKPRFRNCIVNGIVLASDKKKMSKRLKNYPDPMDVINRYSADSLRLYLISSPVVMAENMCFSEEGVGEVLKTLLIPWYNCIYFYSECPNAGDQEQTRMDDWILNTLNTFGNKVKRDMSKYMLQGVMGYATSFVNDLSNWYIRLN.

The short motif at 505–509 is the 'KMSKS' region element; sequence KMSKR. Lys508 is an ATP binding site.

This sequence belongs to the class-I aminoacyl-tRNA synthetase family.

The catalysed reaction is tRNA(Ile) + L-isoleucine + ATP = L-isoleucyl-tRNA(Ile) + AMP + diphosphate. This is Isoleucine--tRNA ligase from Antonospora locustae (Microsporidian parasite).